The primary structure comprises 289 residues: D-alanine aminotransferase (289 aa).

Position 31 (Y31) interacts with substrate. R50 is a pyridoxal 5'-phosphate binding site. The substrate site is built by R99 and H101. N6-(pyridoxal phosphate)lysine is present on K147. E179 is a pyridoxal 5'-phosphate binding site.

Belongs to the class-IV pyridoxal-phosphate-dependent aminotransferase family. In terms of assembly, homodimer. It depends on pyridoxal 5'-phosphate as a cofactor.

It carries out the reaction D-alanine + 2-oxoglutarate = D-glutamate + pyruvate. In terms of biological role, acts on the D-isomers of alanine, leucine, aspartate, glutamate, aminobutyrate, norvaline and asparagine. The enzyme transfers an amino group from a substrate D-amino acid to the pyridoxal phosphate cofactor to form pyridoxamine and an alpha-keto acid in the first half-reaction. The second half-reaction is the reverse of the first, transferring the amino group from the pyridoxamine to a second alpha-keto acid to form the product D-amino acid via a ping-pong mechanism. This is an important process in the formation of D-alanine and D-glutamate, which are essential bacterial cell wall components. The protein is D-alanine aminotransferase (dat) of Listeria monocytogenes serovar 1/2a (strain ATCC BAA-679 / EGD-e).